Here is a 207-residue protein sequence, read N- to C-terminus: Casparian strip membrane protein 1 (207 aa).

Residues 1–12 (MEADSTTINVTE) are compositionally biased toward polar residues. The segment at 1-20 (MEADSTTINVTETPKERKGK) is disordered. At 1-48 (MEADSTTINVTETPKERKGKAPLLAAPPASSGVKRVLQKAPKGGYKRG) the chain is on the cytoplasmic side. The helical transmembrane segment at 49–69 (LAVFDVVLRLAGIATALGAAI) threads the bilayer. Over 70–98 (AMGSTDQTLPFFTQFFQFKAEFDDLPAFT) the chain is Extracellular. Residues 99 to 119 (FFVIANAITAAYLALTIPISI) traverse the membrane as a helical segment. The Cytoplasmic segment spans residues 120 to 131 (VCIIRPHLVAPR). A helical transmembrane segment spans residues 132 to 152 (VLLIFLDTVMVALTTAAAGGT). Topologically, residues 153–184 (ASIVYLAHNGNSDANWPAICQQFNDXCQKVSG) are extracellular. Residues 185–205 (AVVASFLTVVVLMLLIVLSAF) form a helical membrane-spanning segment. The Cytoplasmic portion of the chain corresponds to 206 to 207 (AL).

This sequence belongs to the Casparian strip membrane proteins (CASP) family. Homodimer and heterodimers.

The protein localises to the cell membrane. Its function is as follows. Regulates membrane-cell wall junctions and localized cell wall deposition. Required for establishment of the Casparian strip membrane domain (CSD) and the subsequent formation of Casparian strips, a cell wall modification of the root endodermis that determines an apoplastic barrier between the intraorganismal apoplasm and the extraorganismal apoplasm and prevents lateral diffusion. The chain is Casparian strip membrane protein 1 from Cynara cardunculus var. scolymus (Globe artichoke).